Consider the following 726-residue polypeptide: Probable pre-mRNA-splicing factor ATP-dependent RNA helicase DEAH2 (726 aa).

One can recognise a Helicase ATP-binding domain in the interval 71 to 240; sequence LKTLNNNQTL…FSGAPLMKVP (170 aa). 84 to 91 serves as a coordination point for ATP; sequence GETGSGKT. The DEAH box motif lies at 187–190; it reads DEAH. In terms of domain architecture, Helicase C-terminal spans 265–445; sequence TVVQIHMCEP…NTVLTLKKLG (181 aa).

The protein belongs to the DEAD box helicase family. DEAH subfamily. PRP43 sub-subfamily.

It carries out the reaction ATP + H2O = ADP + phosphate + H(+). In terms of biological role, may be involved in pre-mRNA splicing. The chain is Probable pre-mRNA-splicing factor ATP-dependent RNA helicase DEAH2 from Arabidopsis thaliana (Mouse-ear cress).